The chain runs to 585 residues: Probable inactive serine/threonine-protein kinase slob1 (585 aa).

The segment at 21-82 (DQSSLECNDC…LCRSCNNSFE (62 aa)) adopts an FYVE-type zinc-finger fold. Residues cysteine 27, cysteine 30, cysteine 43, cysteine 46, cysteine 51, cysteine 54, cysteine 74, and cysteine 77 each coordinate Zn(2+). The 371-residue stretch at 108 to 478 (SKPLQDIGHT…STSLLNNSFN (371 aa)) folds into the Protein kinase domain. Composition is skewed to low complexity over residues 426–456 (ISKLSSSSSNNNSNNNNNNNNNSNTFNNISS) and 466–503 (LPSSTSLLNNSFNLSNNNNPSSPSTSTISPNSSLISSP). Residues 426–585 (ISKLSSSSSN…SLKPSSTKKK (160 aa)) are disordered. Residues 513 to 532 (TPPPPPPPPKSAPPPPPPPS) show a composition bias toward pro residues. Residues 533–542 (SSKLPPSSSS) are compositionally biased toward low complexity. Residues 542 to 562 (SRNSLLESIRNADNAKKLKKT) enclose the WH2 domain.

Belongs to the protein kinase superfamily. Ser/Thr protein kinase family.

This is Probable inactive serine/threonine-protein kinase slob1 (slob1) from Dictyostelium discoideum (Social amoeba).